The following is a 317-amino-acid chain: Melanocyte-stimulating hormone receptor (317 aa).

Topologically, residues 1-37 (MPVQGSQRRLLGSLNSTPTATPRLGLAANQTGARCLE) are extracellular. N-linked (GlcNAc...) asparagine glycosylation occurs at asparagine 29. A helical membrane pass occupies residues 38 to 63 (VSIPDGLFLSLGLVSLVENVLVVVAI). Topologically, residues 64–72 (ARNRNLHSP) are cytoplasmic. Residues 73–93 (MYCFICCLALSDLLVSGSNML) traverse the membrane as a helical segment. Topologically, residues 94-118 (DTAVILLLEAGALAARAAVVQQLDN) are extracellular. The chain crosses the membrane as a helical span at residues 119-140 (VIDVITCSSMLSSLCFLGAIAV). The Cytoplasmic portion of the chain corresponds to 141 to 163 (DRYISIFYALRYHSIVTLRRARR). A helical transmembrane segment spans residues 164 to 183 (VVAAIWVASILFSTLFIAYC). The Extracellular portion of the chain corresponds to 184-191 (DHAAVLLC). Residues 192 to 211 (LVVFFLAMLVLMAVLYVHML) traverse the membrane as a helical segment. Residues 212-240 (ARACQHAQGIAQLHKRQRPAHQGVGLKGA) lie on the Cytoplasmic side of the membrane. A helical membrane pass occupies residues 241–266 (ATLTILLGIFFLCWGPFFLHLTLIVL). Topologically, residues 267 to 279 (CPQHPTCSCIFKN) are extracellular. The helical transmembrane segment at 280–300 (FNLFLTLIICNAIIDPLIYAF) threads the bilayer. The Cytoplasmic segment spans residues 301–317 (RSQELRRTLKKVLLCSW). Cysteine 315 is lipidated: S-palmitoyl cysteine.

This sequence belongs to the G-protein coupled receptor 1 family. In terms of assembly, interacts with MGRN1, but does not undergo MGRN1-mediated ubiquitination; this interaction competes with GNAS-binding and thus inhibits agonist-induced cAMP production. Interacts with OPN3; the interaction results in a decrease in MC1R-mediated cAMP signaling and ultimately a decrease in melanin production in melanocytes.

It is found in the cell membrane. Its function is as follows. Receptor for MSH (alpha, beta and gamma) and ACTH. The activity of this receptor is mediated by G proteins which activate adenylate cyclase. Mediates melanogenesis, the production of eumelanin (black/brown) and phaeomelanin (red/yellow), via regulation of cAMP signaling in melanocytes. The protein is Melanocyte-stimulating hormone receptor (MC1R) of Trachypithecus francoisi (Francois' leaf monkey).